The sequence spans 222 residues: MSLQVKDIKKSFGNGQSETPVLKGINFNVNEGEFVILNGASGSGKTTLLTILGGLLSQSSGDILYNNQPLFTRDRKASELRLNEIGFIFQSSHLVPYLKVKAQLTTIGKEAGMTMQEANQRAETLLKQIGLNHRLTAFPHMLSGGEKQRVAIVRALMNHPKIILADEPTASLDAERATEVIEMIKNQIKSKKMIGIMITHDKRLFEYADKVIELDDGVITNA.

One can recognise an ABC transporter domain in the interval leucine 3–alanine 222. Glycine 39–threonine 46 contacts ATP.

This sequence belongs to the ABC transporter superfamily. HrtA family. As to quaternary structure, the complex is composed of two ATP-binding proteins (HrtA), two transmembrane proteins (HrtB) and a solute-binding protein.

The protein resides in the cell membrane. In terms of biological role, part of the ABC transporter complex hrt involved in hemin import. Responsible for energy coupling to the transport system. The chain is Putative hemin import ATP-binding protein HrtA (hrtA) from Staphylococcus saprophyticus subsp. saprophyticus (strain ATCC 15305 / DSM 20229 / NCIMB 8711 / NCTC 7292 / S-41).